Reading from the N-terminus, the 614-residue chain is UvrABC system protein C (614 aa).

The GIY-YIG domain maps to 16-94 (SRPGVYRMFG…VKSLKPRFNV (79 aa)). The UVR domain occupies 204–239 (GELQKRLASEMEAASEAMEFETAARLRDRIRAIAHV).

The protein belongs to the UvrC family. In terms of assembly, interacts with UvrB in an incision complex.

Its subcellular location is the cytoplasm. In terms of biological role, the UvrABC repair system catalyzes the recognition and processing of DNA lesions. UvrC both incises the 5' and 3' sides of the lesion. The N-terminal half is responsible for the 3' incision and the C-terminal half is responsible for the 5' incision. The polypeptide is UvrABC system protein C (Hyphomonas neptunium (strain ATCC 15444)).